The following is a 142-amino-acid chain: Large-conductance mechanosensitive channel (142 aa).

2 helical membrane passes run 14 to 34 (VVDLAVAVIIGAAFGKIVSSL) and 86 to 106 (FGQFITVAVNFLLIAFVVFLV).

Belongs to the MscL family. As to quaternary structure, homopentamer.

The protein resides in the cell inner membrane. In terms of biological role, channel that opens in response to stretch forces in the membrane lipid bilayer. May participate in the regulation of osmotic pressure changes within the cell. The sequence is that of Large-conductance mechanosensitive channel from Rhizorhabdus wittichii (strain DSM 6014 / CCUG 31198 / JCM 15750 / NBRC 105917 / EY 4224 / RW1) (Sphingomonas wittichii).